A 112-amino-acid chain; its full sequence is Large ribosomal subunit protein uL22 (112 aa).

Belongs to the universal ribosomal protein uL22 family. In terms of assembly, part of the 50S ribosomal subunit.

This protein binds specifically to 23S rRNA; its binding is stimulated by other ribosomal proteins, e.g. L4, L17, and L20. It is important during the early stages of 50S assembly. It makes multiple contacts with different domains of the 23S rRNA in the assembled 50S subunit and ribosome. Its function is as follows. The globular domain of the protein is located near the polypeptide exit tunnel on the outside of the subunit, while an extended beta-hairpin is found that lines the wall of the exit tunnel in the center of the 70S ribosome. The polypeptide is Large ribosomal subunit protein uL22 (Mesoplasma florum (strain ATCC 33453 / NBRC 100688 / NCTC 11704 / L1) (Acholeplasma florum)).